Here is a 215-residue protein sequence, read N- to C-terminus: Cytochrome b6 (215 aa).

A helical membrane pass occupies residues 32 to 52; the sequence is IFYCLGGITLTCFLVQVATGF. Residue Cys-35 coordinates heme c. The heme b site is built by His-86 and His-100. The next 3 membrane-spanning stretches (helical) occupy residues 90–110, 116–136, and 186–206; these read ASMMVLMMILHVFRVYLTGGF, LTWVTGVVLAVLTASFGVTGY, and LHTFVLPLLTAVFMLMHFPMI. Heme b is bound by residues His-187 and His-202.

The protein belongs to the cytochrome b family. PetB subfamily. As to quaternary structure, the 4 large subunits of the cytochrome b6-f complex are cytochrome b6, subunit IV (17 kDa polypeptide, PetD), cytochrome f and the Rieske protein, while the 4 small subunits are PetG, PetL, PetM and PetN. The complex functions as a dimer. Heme b serves as cofactor. Requires heme c as cofactor.

Its subcellular location is the plastid. The protein localises to the chloroplast thylakoid membrane. In terms of biological role, component of the cytochrome b6-f complex, which mediates electron transfer between photosystem II (PSII) and photosystem I (PSI), cyclic electron flow around PSI, and state transitions. This is Cytochrome b6 from Phalaenopsis aphrodite subsp. formosana (Moth orchid).